The following is a 2184-amino-acid chain: Genome polyprotein (2184 aa).

G2 carries N-myristoyl glycine; by host lipidation. Over 2-1494 (GAQVSTQKTG…HVSRAFICLQ (1493 aa)) the chain is Cytoplasmic. The amphipathic alpha-helix stretch occupies residues 567–583 (FYQGDVQNAVEGAMVRV). Catalysis depends on for protease 2A activity residues H871 and D889. 2 residues coordinate Zn(2+): C906 and C908. C960 functions as the For protease 2A activity in the catalytic mechanism. Zn(2+) is bound by residues C966 and H968. Residues 1100–1172 (NNGWLKKFTE…EQSAPSQGDQ (73 aa)) form a membrane-binding region. The oligomerization stretch occupies residues 1100 to 1238 (NNGWLKKFTE…SPGAGKSVAT (139 aa)). Residues 1121–1125 (AIKIQ) form an RNA-binding region. The SF3 helicase domain occupies 1204–1360 (EKKMSNYIQF…SMYSQNGKIN (157 aa)). Positions 1368, 1380, and 1385 each coordinate Zn(2+). The segment at 1368–1385 (CDEDCCPVNFKKCCPLVC) adopts a C4-type; degenerate zinc-finger fold. An RNA-binding region spans residues 1412–1419 (EYNHRHSV). Positions 1423 to 1428 (LEALFQ) are oligomerization. Residues 1495 to 1510 (ALTTFVSVAGIIYIIY) lie within the membrane without spanning it. Topologically, residues 1511–2184 (KLFAGFQGAY…TLRRKWLDSF (674 aa)) are cytoplasmic. At Y1520 the chain carries O-(5'-phospho-RNA)-tyrosine. In terms of domain architecture, Peptidase C3 spans 1540–1718 (GPAFEFAVAM…FSAALLRHYF (179 aa)). Catalysis depends on for protease 3C activity residues H1579, E1610, and C1686. The region spanning 1949-2065 (GHLIAFDYSG…SYPWPIDASL (117 aa)) is the RdRp catalytic domain. Residues D1955 and D2051 each coordinate Mg(2+).

It belongs to the picornaviruses polyprotein family. As to quaternary structure, interacts with capsid protein VP1 and capsid protein VP3 to form heterotrimeric protomers. In terms of assembly, interacts with capsid protein VP0, and capsid protein VP3 to form heterotrimeric protomers. Five protomers subsequently associate to form pentamers which serve as building blocks for the capsid. Interacts with capsid protein VP2, capsid protein VP3 and capsid protein VP4 following cleavage of capsid protein VP0. Interacts with capsid protein VP1 and capsid protein VP3 in the mature capsid. As to quaternary structure, interacts with capsid protein VP0 and capsid protein VP1 to form heterotrimeric protomers. Five protomers subsequently associate to form pentamers which serve as building blocks for the capsid. Interacts with capsid protein VP4 in the mature capsid. Interacts with protein 2C; this interaction may be important for virion morphogenesis. In terms of assembly, interacts with capsid protein VP1 and capsid protein VP3. Homodimer. As to quaternary structure, homohexamer; forms a hexameric ring structure with 6-fold symmetry characteristic of AAA+ ATPases. Interacts (via N-terminus) with host RTN3 (via reticulon domain); this interaction is important for viral replication. Interacts with capsid protein VP3; this interaction may be important for virion morphogenesis. In terms of assembly, interacts with protein 3CD. Homodimer. Interacts with host GBF1. Interacts (via GOLD domain) with host ACBD3 (via GOLD domain); this interaction allows the formation of a viral protein 3A/ACBD3 heterotetramer with a 2:2 stoichiometry, which will stimulate the recruitment of host PI4KB in order to synthesize PI4P at the viral RNA replication sites. As to quaternary structure, interacts with RNA-directed RNA polymerase. In terms of assembly, interacts with protein 3AB and with RNA-directed RNA polymerase. Interacts with Viral protein genome-linked and with protein 3CD. Requires Mg(2+) as cofactor. Specific enzymatic cleavages in vivo by the viral proteases yield processing intermediates and the mature proteins. In terms of processing, myristoylation is required for the formation of pentamers during virus assembly. Further assembly of 12 pentamers and a molecule of genomic RNA generates the provirion. Post-translationally, during virion maturation, immature virions are rendered infectious following cleavage of VP0 into VP4 and VP2. This maturation seems to be an autocatalytic event triggered by the presence of RNA in the capsid and it is followed by a conformational change infectious virion. Myristoylation is required during RNA encapsidation and formation of the mature virus particle. In terms of processing, VPg is uridylylated by the polymerase into VPg-pUpU. This acts as a nucleotide-peptide primer for the genomic RNA replication.

The protein resides in the virion. Its subcellular location is the host cytoplasm. The protein localises to the host cytoplasmic vesicle membrane. It is found in the host nucleus. It catalyses the reaction a ribonucleoside 5'-triphosphate + H2O = a ribonucleoside 5'-diphosphate + phosphate + H(+). The enzyme catalyses Selective cleavage of Tyr-|-Gly bond in the picornavirus polyprotein.. It carries out the reaction RNA(n) + a ribonucleoside 5'-triphosphate = RNA(n+1) + diphosphate. The catalysed reaction is Selective cleavage of Gln-|-Gly bond in the poliovirus polyprotein. In other picornavirus reactions Glu may be substituted for Gln, and Ser or Thr for Gly.. With respect to regulation, replication or transcription is subject to high level of random mutations by the nucleotide analog ribavirin. Its function is as follows. Forms an icosahedral capsid of pseudo T=3 symmetry with capsid proteins VP2 and VP3. The capsid is 300 Angstroms in diameter, composed of 60 copies of each capsid protein and enclosing the viral positive strand RNA genome. Capsid protein VP1 mainly forms the vertices of the capsid. Capsid protein VP1 interacts with host ITGA2/ITGB1 to provide virion attachment to target host cells. This attachment induces virion internalization predominantly through caveolin-mediated endocytosis. Tyrosine kinases are probably involved in the entry process. After binding to its receptor, the capsid undergoes conformational changes. Capsid protein VP1 N-terminus (that contains an amphipathic alpha-helix) and capsid protein VP4 are externalized. Together, they shape a pore in the host membrane through which viral genome is translocated to host cell cytoplasm. In terms of biological role, forms an icosahedral capsid of pseudo T=3 symmetry with capsid proteins VP2 and VP3. The capsid is 300 Angstroms in diameter, composed of 60 copies of each capsid protein and enclosing the viral positive strand RNA genome. Functionally, lies on the inner surface of the capsid shell. After binding to the host receptor, the capsid undergoes conformational changes. Capsid protein VP4 is released, Capsid protein VP1 N-terminus is externalized, and together, they shape a pore in the host membrane through which the viral genome is translocated into the host cell cytoplasm. Component of immature procapsids, which is cleaved into capsid proteins VP4 and VP2 after maturation. Allows the capsid to remain inactive before the maturation step. Its function is as follows. Cysteine protease that cleaves viral polyprotein and specific host proteins. It is responsible for the autocatalytic cleavage between the P1 and P2 regions, which is the first cleavage occurring in the polyprotein. Also cleaves the host translation initiation factor EIF4G1, in order to shut down the capped cellular mRNA translation. Inhibits the host nucleus-cytoplasm protein and RNA trafficking by cleaving host members of the nuclear pores. Counteracts stress granule formation probably by antagonizing its assembly or promoting its dissassembly. In terms of biological role, plays an essential role in the virus replication cycle by acting as a viroporin. Creates a pore in the host endoplasmic reticulum and as a consequence releases Ca2+ in the cytoplasm of infected cell. In turn, high levels of cytoplasmic calcium may trigger membrane trafficking and transport of viral ER-associated proteins to viroplasms, sites of viral genome replication. Functionally, induces and associates with structural rearrangements of intracellular membranes. Displays RNA-binding, nucleotide binding and NTPase activities. May play a role in virion morphogenesis and viral RNA encapsidation by interacting with the capsid protein VP3. Localizes the viral replication complex to the surface of membranous vesicles. Together with protein 3CD binds the Cis-Active RNA Element (CRE) which is involved in RNA synthesis initiation. Acts as a cofactor to stimulate the activity of 3D polymerase, maybe through a nucleid acid chaperone activity. Its function is as follows. Localizes the viral replication complex to the surface of membranous vesicles. It inhibits host cell endoplasmic reticulum-to-Golgi apparatus transport and causes the disassembly of the Golgi complex, possibly through GBF1 interaction. This would result in depletion of MHC, trail receptors and IFN receptors at the host cell surface. Plays an essential role in viral RNA replication by recruiting ACBD3 and PI4KB at the viral replication sites, thereby allowing the formation of the rearranged membranous structures where viral replication takes place. In terms of biological role, acts as a primer for viral RNA replication and remains covalently bound to viral genomic RNA. VPg is uridylylated prior to priming replication into VPg-pUpU. The oriI viral genomic sequence may act as a template for this. The VPg-pUpU is then used as primer on the genomic RNA poly(A) by the RNA-dependent RNA polymerase to replicate the viral genome. During genome replication, the VPg-RNA linkage is removed by the host TDP2, thereby accelerating replication. During the late stage of the replication cycle, host TDP2 is excluded from sites of viral RNA synthesis and encapsidation, allowing for the generation of progeny virions. Functionally, involved in the viral replication complex and viral polypeptide maturation. It exhibits protease activity with a specificity and catalytic efficiency that is different from protease 3C. Protein 3CD lacks polymerase activity. Protein 3CD binds to the 5'UTR of the viral genome. Replicates the viral genomic RNA on the surface of intracellular membranes. May form linear arrays of subunits that propagate along a strong head-to-tail interaction called interface-I. Covalently attaches UMP to a tyrosine of VPg, which is used to prime RNA synthesis. The positive stranded RNA genome is first replicated at virus induced membranous vesicles, creating a dsRNA genomic replication form. This dsRNA is then used as template to synthesize positive stranded RNA genomes. ss(+)RNA genomes are either translated, replicated or encapsidated. Its function is as follows. Major viral protease that mediates proteolytic processing of the polyprotein. Cleaves host EIF5B, contributing to host translation shutoff. Also cleaves host PABPC1, contributing to host translation shutoff. Cleaves host NLRP1, triggers host N-glycine-mediated degradation of the autoinhibitory NLRP1 N-terminal fragment. This chain is Genome polyprotein, found in Homo sapiens (Human).